A 1130-amino-acid chain; its full sequence is Transmembrane channel-like protein 3 (1130 aa).

The Cytoplasmic portion of the chain corresponds to 1–148 (MKTSKASQRY…ASYFIFLRWL (148 aa)). A helical membrane pass occupies residues 149–169 (FGINIVLTVMTGAFVVLPELI). The Extracellular portion of the chain corresponds to 170 to 192 (AGQPFGSTASKTIPREQITSAQD). A helical transmembrane segment spans residues 193-213 (LDTVWSLGGYLQYSVLFYGYY). The Cytoplasmic segment spans residues 214 to 225 (GRERRIGRAGYR). Residues 226-246 (LPLAYFLVGMAVFAYSFIVLL) traverse the membrane as a helical segment. Residues 247-319 (KRMAKNSRTS…KNMAVTVCLR (73 aa)) are Extracellular-facing. Asparagine 264 carries N-linked (GlcNAc...) asparagine glycosylation. Residues 320 to 340 (IIANILVLLSLAGSIYLIYFV) form a helical membrane-spanning segment. Residues 341-361 (VDRSQKLEQSKKELTLWEKNE) are Cytoplasmic-facing. A helical membrane pass occupies residues 362–382 (VSVVVSLVTMLAPSAFDLIAA). Topologically, residues 383 to 393 (LEMYHPRTTLR) are extracellular. A helical membrane pass occupies residues 394 to 414 (FQLARVLVLYLGNLYSLIIAL). At 415-509 (LDKVNSMNIE…CWETYVGQEM (95 aa)) the chain is on the cytoplasmic side. A helical transmembrane segment spans residues 510–530 (LKLSVIDMLFTVASILLIDFF). At 531–570 (RGLFVRYLSDYWCWDLESKFPEYGEFKIAENVLHLVYNQG) the chain is on the extracellular side. A helical membrane pass occupies residues 571–591 (MIWMGAFFSPCLPAFNVLKLI). The Cytoplasmic portion of the chain corresponds to 592 to 619 (GLMYLRSWAVLTCNVPHQQVFRASRSNN). The helical transmembrane segment at 620-640 (FYLAMLLFMLFLCMLPTIFAI) threads the bilayer. The Extracellular segment spans residues 641–680 (VHYKPSLNCGPFSGQEKIYDIVSETIENDFPTWFHAVVGH). The chain crosses the membrane as a helical span at residues 681–701 (ISSPVVILPAVLLLFMLIYYL). The Cytoplasmic portion of the chain corresponds to 702 to 1130 (QSIARSLKLS…DLNDLICSNV (429 aa)). 5 disordered regions span residues 742 to 774 (DARQ…EESS), 819 to 893 (RSLP…FQPI), 999 to 1019 (SSCF…KYQR), 1033 to 1059 (QLER…LKAR), and 1097 to 1116 (QGRF…KSRQ). Polar residues predominate over residues 747-767 (GSATEAESSENSKPKTLQARI). Residues 840–850 (SRSRPEQDTNR) show a composition bias toward basic and acidic residues. The segment covering 856–876 (CSSTSNLHKNRSCSSVTQTQP) has biased composition (polar residues). Basic and acidic residues-rich tracts occupy residues 878–890 (KDVR…RKDF) and 1006–1017 (DRSENNTRDPKY). The span at 1097–1106 (QGRFPRSASQ) shows a compositional bias: polar residues.

It belongs to the TMC family. As to expression, detected in most neuronal organs and also in some non-neuronal tissues.

The protein localises to the membrane. Probable component of an ion channel. Molecular function hasn't been characterized yet. In Mus musculus (Mouse), this protein is Transmembrane channel-like protein 3.